We begin with the raw amino-acid sequence, 513 residues long: ATP synthase subunit alpha (513 aa).

171-178 provides a ligand contact to ATP; the sequence is GDRQIGKT.

The protein belongs to the ATPase alpha/beta chains family. As to quaternary structure, F-type ATPases have 2 components, CF(1) - the catalytic core - and CF(0) - the membrane proton channel. CF(1) has five subunits: alpha(3), beta(3), gamma(1), delta(1), epsilon(1). CF(0) has three main subunits: a(1), b(2) and c(9-12). The alpha and beta chains form an alternating ring which encloses part of the gamma chain. CF(1) is attached to CF(0) by a central stalk formed by the gamma and epsilon chains, while a peripheral stalk is formed by the delta and b chains.

The protein localises to the cell membrane. It catalyses the reaction ATP + H2O + 4 H(+)(in) = ADP + phosphate + 5 H(+)(out). Functionally, produces ATP from ADP in the presence of a proton gradient across the membrane. The alpha chain is a regulatory subunit. In Wolbachia pipientis wMel, this protein is ATP synthase subunit alpha.